The sequence spans 426 residues: MVNYFIISISFFLLEHFYSFYLNFRQSKLLKNLTKVPEYCKDRITQEDFKKSQEYSKAKLDYKTLTSTIQVLTTLLSFYYPVYPYFWNLSLELAEKIGYPNEIIRSCFFFAFTVGVSVITEIPFSYYYQFILEEKFGYNRMTRTLFIKDKIISTLLMIGFGLPILSLAIFIINWSGPQLWFYCWLLLVAITLLSITIYPTFIQPLFNKFTPVDGELAESIFALAKRVGFPASKDTIFVVDNSKRDGHMNAYFYGLFGTKRIVLYDTLVNELDKEELLAVMGHEFGHYKMSHTLKQMLLVQVHLVTLLYAFSLLINDDQLYQQFGFVSSKDSVLVGLTLFMFLYSPIDRIFSLLINIFSRKYEFQADDFAVELGFLNSNHLFKLHFKELGCLVYDPLYSAYHHSHPTLVERSNNIDKKVALYKLKNK.

The Lumenal segment spans residues 1–3 (MVN). The chain crosses the membrane as a helical span at residues 4 to 24 (YFIISISFFLLEHFYSFYLNF). At 25–70 (RQSKLLKNLTKVPEYCKDRITQEDFKKSQEYSKAKLDYKTLTSTIQ) the chain is on the cytoplasmic side. Residues 71 to 91 (VLTTLLSFYYPVYPYFWNLSL) form a helical membrane-spanning segment. The Lumenal segment spans residues 92–106 (ELAEKIGYPNEIIRS). The chain crosses the membrane as a helical span at residues 107-127 (CFFFAFTVGVSVITEIPFSYY). Residues 128-150 (YQFILEEKFGYNRMTRTLFIKDK) are Cytoplasmic-facing. The helical transmembrane segment at 151–171 (IISTLLMIGFGLPILSLAIFI) threads the bilayer. Over 172–178 (INWSGPQ) the chain is Lumenal. The helical transmembrane segment at 179–199 (LWFYCWLLLVAITLLSITIYP) threads the bilayer. Residues 200–294 (TFIQPLFNKF…GHYKMSHTLK (95 aa)) are Cytoplasmic-facing. Position 282 (H282) interacts with Zn(2+). E283 is an active-site residue. Residue H286 participates in Zn(2+) binding. Residues 295-315 (QMLLVQVHLVTLLYAFSLLIN) form a helical membrane-spanning segment. Over 316–333 (DDQLYQQFGFVSSKDSVL) the chain is Lumenal. Residues 334–354 (VGLTLFMFLYSPIDRIFSLLI) form a helical membrane-spanning segment. Residues 355-426 (NIFSRKYEFQ…KVALYKLKNK (72 aa)) lie on the Cytoplasmic side of the membrane. Position 362 (E362) interacts with Zn(2+).

This sequence belongs to the peptidase M48B family. It depends on Zn(2+) as a cofactor.

It localises to the endoplasmic reticulum membrane. It catalyses the reaction Hydrolyzes the peptide bond -P2-(S-farnesyl or geranylgeranyl)C-P1'-P2'-P3'-COOH where P1' and P2' are amino acids with aliphatic side chains and P3' is any C-terminal residue.. In terms of biological role, proteolytically removes the C-terminal three residues of farnesylated proteins. This Dictyostelium discoideum (Social amoeba) protein is CAAX prenyl protease 1 homolog (zmpste24).